Reading from the N-terminus, the 498-residue chain is MAAAKTDMLVSPLQISDPFSSFPHSPTMDNYPKLEEMMLLNPGAPQFLGAAVPEGSGFNSPVEGSEQFDHLAADAFSDMSLSGEKAVIESSYANQSARLPSLTYTGRFSLEPAPNSSNTLWPEPLFSLVSGLVGMANASPSSAPSSSPSSSSSSSQSPPLSCSVQSNDSSPIYSAAPTFPNSSPELFPDQSPQPFQNASTASIPYPPPAYPVSKTTFQVPMIPDYLFPQQQGDVSLVSADQKPFQAMESRTQQPSLTPLSTIKAFATQTSQDLKTINSTYQSQIIKPSRMRKYPNRPSKTPPHERPYACPVESCDRRFSRSDELTRHIRIHTGQKPFQCRICMRNFSRSDHLTTHIRTHTGEKPFACDICGRKFARSDERKRHTKIHLRQKDKKADKATPVSVASPVSSYSPSASTSYPSPVPTSYSSPVSSAYPSPVHSSFPSPTTAVTYPSVTSTFQTHGITSFPSSIVTNSFSSPVSSALSDMSITYSPRTIEIC.

Disordered stretches follow at residues 137–203 and 287–308; these read NASP…TASI and PSRMRKYPNRPSKTPPHERPYA. Residues 139–163 are compositionally biased toward low complexity; sequence SPSSAPSSSPSSSSSSSQSPPLSCS. Residues 179 to 202 are compositionally biased toward polar residues; that stretch reads FPNSSPELFPDQSPQPFQNASTAS. C2H2-type zinc fingers lie at residues 307-331, 337-359, and 365-387; these read YACPVESCDRRFSRSDELTRHIRIH, FQCRICMRNFSRSDHLTTHIRTH, and FACDICGRKFARSDERKRHTKIH. Residues 378–422 are disordered; that stretch reads DERKRHTKIHLRQKDKKADKATPVSVASPVSSYSPSASTSYPSPV. A compositionally biased stretch (basic residues) spans 382–392; the sequence is RHTKIHLRQKD. A compositionally biased stretch (low complexity) spans 398-422; it reads ATPVSVASPVSSYSPSASTSYPSPV.

The protein belongs to the EGR C2H2-type zinc-finger protein family.

Its subcellular location is the nucleus. It localises to the cytoplasm. Functionally, transcriptional regulator. Recognizes and binds to the DNA sequence 5'-GCG(T/G)GGGCG-3'(EGR-site) in the promoter region of target genes. Binds double-stranded target DNA, irrespective of the cytosine methylation status. Regulates the transcription of numerous target genes, and thereby plays an important role in regulating the response to growth factors, DNA damage, and ischemia. Plays a role in the regulation of cell survival, proliferation and cell death. Mediates responses to ischemia and hypoxia; regulates the expression of proteins that are involved in inflammatory processes. Plays a role in regulating the expression of circadian clock genes. The chain is Early growth response protein 1 from Xenopus tropicalis (Western clawed frog).